Here is a 109-residue protein sequence, read N- to C-terminus: Mitochondrial pyruvate carrier 1 (109 aa).

Residue A2 is modified to N-acetylalanine. Over 2-20 (AGALVRKAADYVRSKDFRD) the chain is Mitochondrial matrix. Residues 21–41 (YLMSTHFWGPVANWGLPIAAI) traverse the membrane as a helical segment. Topologically, residues 42–52 (NDMKKSPEIIS) are mitochondrial intermembrane. Residues 53–71 (GRMTFALCCYSLTFMRFAY) traverse the membrane as a helical segment. An N6-acetyllysine modification is found at K72. Residues 72–109 (KVQPRNWLLFACHVTNEVAQLIQGGRLINYEMSKRPSA) are Mitochondrial matrix-facing.

The protein belongs to the mitochondrial pyruvate carrier (MPC) (TC 2.A.105) family. In terms of assembly, homodimer. Forms heterodimer with MPC2. The heterodimer is the more stable and dominant form.

It localises to the mitochondrion inner membrane. It carries out the reaction pyruvate(out) + H(+)(out) = pyruvate(in) + H(+)(in). Its function is as follows. Mediates the uptake of pyruvate into mitochondria. The sequence is that of Mitochondrial pyruvate carrier 1 (Mpc1) from Mus musculus (Mouse).